The following is a 447-amino-acid chain: Alpha-1,6-mannosyl-glycoprotein 2-beta-N-acetylglucosaminyltransferase (447 aa).

Residues 1 to 9 (MRFRIYKRK) are Cytoplasmic-facing. Residues 10–29 (VLILTLVVAACGFVLWSSNG) form a helical; Signal-anchor for type II membrane protein membrane-spanning segment. At 30-447 (RQRKNEALAP…ELCKSYRRLQ (418 aa)) the chain is on the lumenal side. N-linked (GlcNAc...) asparagine glycosylation is found at asparagine 69 and asparagine 86. Residues 123–127 (QVHNR) and aspartate 154 contribute to the substrate site. Cysteine 196 and cysteine 210 form a disulfide bridge. 229–233 (QTKHH) contributes to the substrate binding site. Aspartate 261 contributes to the Mn(2+) binding site. The cysteines at positions 283 and 286 are disulfide-linked. Arginine 298 serves as a coordination point for substrate. 3 disulfides stabilise this stretch: cysteine 334/cysteine 357, cysteine 339/cysteine 440, and cysteine 378/cysteine 386. Histidine 374 serves as a coordination point for Mn(2+).

Belongs to the glycosyltransferase 16 (GT16) protein family. In terms of assembly, homodimer. The cofactor is Mn(2+).

The protein localises to the golgi apparatus membrane. It catalyses the reaction an N(4)-{beta-D-GlcNAc-(1-&gt;2)-alpha-D-Man-(1-&gt;3)-[alpha-D-Man-(1-&gt;6)]-beta-D-Man-(1-&gt;4)-beta-D-GlcNAc-(1-&gt;4)-beta-D-GlcNAc}-L-asparaginyl-[protein] + UDP-N-acetyl-alpha-D-glucosamine = N(4)-{beta-D-GlcNAc-(1-&gt;2)-alpha-D-Man-(1-&gt;3)-[beta-D-GlcNAc-(1-&gt;2)-alpha-D-Man-(1-&gt;6)]-beta-D-Man-(1-&gt;4)-beta-D-GlcNAc-(1-&gt;4)-beta-D-GlcNAc}-L-asparaginyl-[protein] + UDP + H(+). The protein operates within protein modification; protein glycosylation. Plays an essential role in protein N-glycosylation. Catalyzes the transfer of N-acetylglucosamine (GlcNAc) onto the free terminal mannose moiety in the core structure of the nascent N-linked glycan chain, giving rise to the second branch in complex glycans. The chain is Alpha-1,6-mannosyl-glycoprotein 2-beta-N-acetylglucosaminyltransferase (MGAT2) from Homo sapiens (Human).